We begin with the raw amino-acid sequence, 389 residues long: TelA-like protein SH1505 (389 aa).

The protein belongs to the TelA family.

The chain is TelA-like protein SH1505 from Staphylococcus haemolyticus (strain JCSC1435).